The following is a 686-amino-acid chain: ATP-dependent zinc metalloprotease FtsH 1 (686 aa).

The Cytoplasmic segment spans residues 1–33 (MCFCIVSSPEAMHSNADSPSSGPGLQPVWTTLR). A helical membrane pass occupies residues 34–54 (SPYVFWIGGAILLALLVHLGI). Topologically, residues 55-164 (KWQQASAPVR…TFAATQESDW (110 aa)) are periplasmic. Residues 165-185 (VGTLLLWGLPLGLIVGIWLFF) traverse the membrane as a helical segment. Residues 186–686 (MRRMATGGRE…AEGASPSSQG (501 aa)) are Cytoplasmic-facing. An ATP-binding site is contributed by 257-264 (GPPGTGKT). Zn(2+) is bound at residue histidine 479. Residue glutamate 480 is part of the active site. Residues histidine 483 and aspartate 555 each contribute to the Zn(2+) site. Residues 661-686 (YAWLKEGDGTSRNSASAEGASPSSQG) form a disordered region. Residues 670–686 (TSRNSASAEGASPSSQG) show a composition bias toward polar residues.

In the central section; belongs to the AAA ATPase family. This sequence in the C-terminal section; belongs to the peptidase M41 family. As to quaternary structure, homohexamer. The cofactor is Zn(2+).

It is found in the cell inner membrane. Acts as a processive, ATP-dependent zinc metallopeptidase for both cytoplasmic and membrane proteins. Plays a role in the quality control of integral membrane proteins. In Salinibacter ruber (strain M8), this protein is ATP-dependent zinc metalloprotease FtsH 1.